The chain runs to 123 residues: Large ribosomal subunit protein bL12 (123 aa).

A disordered region spans residues 96 to 123; sequence NVKEGVSKEEAEGLKKSLEEAGATVELK. The span at 100–114 shows a compositional bias: basic and acidic residues; it reads GVSKEEAEGLKKSLE.

It belongs to the bacterial ribosomal protein bL12 family. As to quaternary structure, homodimer. Part of the ribosomal stalk of the 50S ribosomal subunit. Forms a multimeric L10(L12)X complex, where L10 forms an elongated spine to which 2 to 4 L12 dimers bind in a sequential fashion. Binds GTP-bound translation factors.

In terms of biological role, forms part of the ribosomal stalk which helps the ribosome interact with GTP-bound translation factors. Is thus essential for accurate translation. The chain is Large ribosomal subunit protein bL12 from Flavobacterium johnsoniae (strain ATCC 17061 / DSM 2064 / JCM 8514 / BCRC 14874 / CCUG 350202 / NBRC 14942 / NCIMB 11054 / UW101) (Cytophaga johnsonae).